The chain runs to 356 residues: tRNA-specific 2-thiouridylase MnmA 1 (356 aa).

ATP is bound by residues 8-15 (GMSGGVDS) and Met34. Residue Cys103 is the Nucleophile of the active site. Cysteines 103 and 199 form a disulfide. Gly127 is an ATP binding site. The tract at residues 149–151 (KDQ) is interaction with tRNA. Catalysis depends on Cys199, which acts as the Cysteine persulfide intermediate. Residues 305–306 (RY) form an interaction with tRNA region.

It belongs to the MnmA/TRMU family.

The protein localises to the cytoplasm. The catalysed reaction is S-sulfanyl-L-cysteinyl-[protein] + uridine(34) in tRNA + AH2 + ATP = 2-thiouridine(34) in tRNA + L-cysteinyl-[protein] + A + AMP + diphosphate + H(+). Catalyzes the 2-thiolation of uridine at the wobble position (U34) of tRNA, leading to the formation of s(2)U34. The sequence is that of tRNA-specific 2-thiouridylase MnmA 1 from Clostridium botulinum (strain ATCC 19397 / Type A).